Consider the following 383-residue polypeptide: uncharacterized protein (383 aa).

This sequence belongs to the peptidase M20 family.

This is an uncharacterized protein from Staphylococcus aureus (strain bovine RF122 / ET3-1).